The chain runs to 53 residues: Temporin-SHd (53 aa).

Residues 1–10 (FLGTINLSLC) form the signal peptide. Residues 11-34 (EQERDADEEKRDEPDESDVEVEKR) constitute a propeptide that is removed on maturation. Phenylalanine 51 carries the phenylalanine amide modification.

Its subcellular location is the secreted. It is found in the target cell membrane. In terms of biological role, non-amphipathic mildly cationic alpha-helical antimicrobial peptide with potent activity against Gram-positive (including methicillin-resistant Staphylococcus aureus (MRSA)) and Gram-negative bacteria, and some fungi, as well as against Trypanosoma and Leishmania (both promastigote and amastigote forms). Strongly and selectively perturbs anionic bilayer membranes by interacting with the polar head groups and acyl region of the phospholipids, with formation of regions of two coexisting phases, one phase rich in peptide and the other lipid-rich. Shows low hemolytic activity (LC(50)=44 uM) and a low toxicity for human monocytes THP-1 and THP-1-derived macrophages. Is not toxic to human hepatoma-derived cells. The polypeptide is Temporin-SHd (Pelophylax saharicus (Sahara frog)).